An 88-amino-acid polypeptide reads, in one-letter code: ADRELKEMLLKKYSGCLSRLRSEFLKKRKKGKLPKDARSALMDWWNTHYRWPYPTEEDKVRLAAATGLDPKQINNWFINQRKRHWKPS.

The ELK domain maps to 4-24; sequence ELKEMLLKKYSGCLSRLRSEF. The segment at residues 25–88 is a DNA-binding region (homeobox; TALE-type); it reads LKKRKKGKLP…NQRKRHWKPS (64 aa).

It belongs to the TALE/KNOX homeobox family.

It is found in the nucleus. Functionally, probably binds to the DNA sequence 5'-TGAC-3'. The sequence is that of Homeobox protein knotted-1-like 11 (KNOX11) from Zea mays (Maize).